An 88-amino-acid polypeptide reads, in one-letter code: Small ribosomal subunit protein bS16 (88 aa).

This sequence belongs to the bacterial ribosomal protein bS16 family.

This chain is Small ribosomal subunit protein bS16, found in Anaeromyxobacter sp. (strain K).